Consider the following 229-residue polypeptide: Small ribosomal subunit protein mS23 (229 aa).

It belongs to the mitochondrion-specific ribosomal protein mS23 family. In terms of assembly, component of the mitochondrial small ribosomal subunit.

The protein resides in the mitochondrion. In Yarrowia lipolytica (strain CLIB 122 / E 150) (Yeast), this protein is Small ribosomal subunit protein mS23 (RSM25).